The chain runs to 199 residues: Large ribosomal subunit protein bL25 (199 aa).

Belongs to the bacterial ribosomal protein bL25 family. CTC subfamily. In terms of assembly, part of the 50S ribosomal subunit; part of the 5S rRNA/L5/L18/L25 subcomplex. Contacts the 5S rRNA. Binds to the 5S rRNA independently of L5 and L18.

Its function is as follows. This is one of the proteins that binds to the 5S RNA in the ribosome where it forms part of the central protuberance. The chain is Large ribosomal subunit protein bL25 from Nostoc punctiforme (strain ATCC 29133 / PCC 73102).